The following is a 244-amino-acid chain: Putative quercetin 2,3-dioxygenase Mb0187c (244 aa).

Positions 60, 62, 104, and 106 each coordinate a divalent metal cation.

It belongs to the pirin family. Requires a divalent metal cation as cofactor.

It catalyses the reaction quercetin + O2 = 2-(3,4-dihydroxybenzoyloxy)-4,6-dihydroxybenzoate + CO. It participates in flavonoid metabolism; quercetin degradation. Its function is as follows. Putative quercetin 2,3-dioxygenase. The chain is Putative quercetin 2,3-dioxygenase Mb0187c from Mycobacterium bovis (strain ATCC BAA-935 / AF2122/97).